The sequence spans 890 residues: Tyrosine-protein kinase receptor TYRO3 (890 aa).

The signal sequence occupies residues 1–40 (MALRRSMGRPGLPPLPLPPPPRLGLLLAALASLLLPESAA). 2 Ig-like C2-type domains span residues 41 to 128 (AGLK…TEIS) and 139 to 220 (PFFT…ATVH). Residues 41 to 429 (AGLKLMGAPV…QGPPHSRTSW (389 aa)) are Extracellular-facing. Asn63 carries an N-linked (GlcNAc...) asparagine glycan. 2 disulfide bridges follow: Cys64–Cys117 and Cys160–Cys203. Residues Asn191, Asn230, Asn240, Asn293, Asn366, and Asn380 are each glycosylated (N-linked (GlcNAc...) asparagine). Fibronectin type-III domains lie at 227 to 320 (APFN…TKGL) and 325 to 416 (APQN…SHDR). A helical transmembrane segment spans residues 430 to 450 (VPVVLGVLTALVTAAALALIL). Topologically, residues 451 to 890 (LRKRRKETRF…QQGLLPHSSC (440 aa)) are cytoplasmic. Ser466 carries the post-translational modification Phosphoserine. Residues 518–790 (FTLGRMLGKG…CLRMELENIL (273 aa)) enclose the Protein kinase domain. Residues 524–532 (LGKGEFGSV) and Lys550 contribute to the ATP site. Asp655 acts as the Proton acceptor in catalysis. A phosphotyrosine; by autocatalysis mark is found at Tyr681, Tyr685, Tyr686, and Tyr804. Disordered stretches follow at residues 815-837 (AGGS…GSGM) and 851-871 (LTPG…ESPL). Phosphoserine occurs at positions 818 and 869.

It belongs to the protein kinase superfamily. Tyr protein kinase family. AXL/UFO subfamily. Monomer and homodimer. Interacts (via N-terminus) with extracellular ligands TULP1 and GAS6. Interacts with PIK3R1; this interaction increases PI3-kinase activity. Autophosphorylated. Abundant in the brain and lower levels in other tissues.

Its subcellular location is the cell membrane. The catalysed reaction is L-tyrosyl-[protein] + ATP = O-phospho-L-tyrosyl-[protein] + ADP + H(+). Functionally, receptor tyrosine kinase that transduces signals from the extracellular matrix into the cytoplasm by binding to several ligands including TULP1 or GAS6. Regulates many physiological processes including cell survival, migration and differentiation. Ligand binding at the cell surface induces dimerization and autophosphorylation of TYRO3 on its intracellular domain that provides docking sites for downstream signaling molecules. Following activation by ligand, interacts with PIK3R1 and thereby enhances PI3-kinase activity. Activates the AKT survival pathway, including nuclear translocation of NF-kappa-B and up-regulation of transcription of NF-kappa-B-regulated genes. TYRO3 signaling plays a role in various processes such as neuron protection from excitotoxic injury, platelet aggregation and cytoskeleton reorganization. Also plays an important role in inhibition of Toll-like receptors (TLRs)-mediated innate immune response by activating STAT1, which selectively induces production of suppressors of cytokine signaling SOCS1 and SOCS3. Its function is as follows. (Microbial infection) Acts as a receptor for lassa virus and lymphocytic choriomeningitis virus, possibly through GAS6 binding to phosphatidyl-serine at the surface of virion envelope. In terms of biological role, (Microbial infection) Acts as a receptor for Ebolavirus, possibly through GAS6 binding to phosphatidyl-serine at the surface of virion envelope. This chain is Tyrosine-protein kinase receptor TYRO3 (TYRO3), found in Homo sapiens (Human).